The primary structure comprises 264 residues: ATP synthase subunit a (264 aa).

The next 6 membrane-spanning stretches (helical) occupy residues 29 to 49 (TWHI…LWIF), 87 to 107 (NALI…MNFM), 134 to 154 (DVNI…YYSI), 177 to 197 (IPVN…SLAL), 208 to 228 (LIFI…SLGV), and 235 to 255 (LIFH…LTIV).

The protein belongs to the ATPase A chain family. As to quaternary structure, F-type ATPases have 2 components, CF(1) - the catalytic core - and CF(0) - the membrane proton channel. CF(1) has five subunits: alpha(3), beta(3), gamma(1), delta(1), epsilon(1). CF(0) has three main subunits: a(1), b(2) and c(9-12). The alpha and beta chains form an alternating ring which encloses part of the gamma chain. CF(1) is attached to CF(0) by a central stalk formed by the gamma and epsilon chains, while a peripheral stalk is formed by the delta and b chains.

It is found in the cell inner membrane. Its function is as follows. Key component of the proton channel; it plays a direct role in the translocation of protons across the membrane. The polypeptide is ATP synthase subunit a (Shewanella sp. (strain MR-4)).